The primary structure comprises 518 residues: GMP synthase [glutamine-hydrolyzing] (518 aa).

One can recognise a Glutamine amidotransferase type-1 domain in the interval 8–201; sequence TVLIIDFGSQ…VLKISNLKGN (194 aa). The active-site Nucleophile is C85. Catalysis depends on residues H175 and E177. The GMPS ATP-PPase domain occupies 202 to 393; it reads WSMASYREQT…LGLPEQFIGR (192 aa). 229 to 235 lines the ATP pocket; it reads SGGVDSS.

Homodimer.

The enzyme catalyses XMP + L-glutamine + ATP + H2O = GMP + L-glutamate + AMP + diphosphate + 2 H(+). Its pathway is purine metabolism; GMP biosynthesis; GMP from XMP (L-Gln route): step 1/1. Its function is as follows. Catalyzes the synthesis of GMP from XMP. This is GMP synthase [glutamine-hydrolyzing] from Bartonella henselae (strain ATCC 49882 / DSM 28221 / CCUG 30454 / Houston 1) (Rochalimaea henselae).